The following is a 584-amino-acid chain: UvrABC system protein C (584 aa).

The 78-residue stretch at 12–89 (NKPGCYLFLN…IKKYRPKYNV (78 aa)) folds into the GIY-YIG domain. The region spanning 194–229 (NQVKQTLVKQMQKASDNLQFEQAKRIKDQITSLDFI) is the UVR domain.

This sequence belongs to the UvrC family. In terms of assembly, interacts with UvrB in an incision complex.

It is found in the cytoplasm. Its function is as follows. The UvrABC repair system catalyzes the recognition and processing of DNA lesions. UvrC both incises the 5' and 3' sides of the lesion. The N-terminal half is responsible for the 3' incision and the C-terminal half is responsible for the 5' incision. This chain is UvrABC system protein C, found in Mycoplasma capricolum subsp. capricolum (strain California kid / ATCC 27343 / NCTC 10154).